Here is a 548-residue protein sequence, read N- to C-terminus: Membrane protein insertase YidC (548 aa).

A helical transmembrane segment spans residues 6 to 26; sequence NLLIIALLFVSFMIWQAWEQD. The segment at 28-52 is disordered; sequence NPQPQQQTTQTTTTAAGSAADQGVP. Low complexity predominate over residues 29–41; that stretch reads PQPQQQTTQTTTT. A run of 4 helical transmembrane segments spans residues 345-365, 420-440, 458-478, and 499-519; these read KFIH…TFIV, LGGC…YYML, LSAQ…MFFI, and PVIF…YYIV.

It belongs to the OXA1/ALB3/YidC family. Type 1 subfamily. In terms of assembly, interacts with the Sec translocase complex via SecD. Specifically interacts with transmembrane segments of nascent integral membrane proteins during membrane integration.

It is found in the cell inner membrane. Functionally, required for the insertion and/or proper folding and/or complex formation of integral membrane proteins into the membrane. Involved in integration of membrane proteins that insert both dependently and independently of the Sec translocase complex, as well as at least some lipoproteins. Aids folding of multispanning membrane proteins. This chain is Membrane protein insertase YidC, found in Klebsiella pneumoniae subsp. pneumoniae (strain ATCC 700721 / MGH 78578).